A 215-amino-acid chain; its full sequence is uncharacterized protein (215 aa).

This is an uncharacterized protein from Ostreid herpesvirus 1 (isolate France) (OsHV-1).